We begin with the raw amino-acid sequence, 375 residues long: 2-oxoglutarate synthase subunit KorA (375 aa).

Heterotetramer of the KorA, KorB, KorC and KorD subunits.

It carries out the reaction 2 oxidized [2Fe-2S]-[ferredoxin] + 2-oxoglutarate + CoA = succinyl-CoA + 2 reduced [2Fe-2S]-[ferredoxin] + CO2 + H(+). This chain is 2-oxoglutarate synthase subunit KorA (korA), found in Methanothermobacter marburgensis (strain ATCC BAA-927 / DSM 2133 / JCM 14651 / NBRC 100331 / OCM 82 / Marburg) (Methanobacterium thermoautotrophicum).